Reading from the N-terminus, the 121-residue chain is Thioredoxin-like protein (121 aa).

One can recognise a Thioredoxin domain in the interval 2-112 (VHHITSNDEL…LGAAAEKLGG (111 aa)). An intrachain disulfide couples Cys30 to Cys33.

It belongs to the thioredoxin family.

Its function is as follows. Participates in various redox reactions through the reversible oxidation of its active center dithiol to a disulfide and catalyzes dithiol-disulfide exchange reactions. The sequence is that of Thioredoxin-like protein from Fusarium culmorum.